Reading from the N-terminus, the 76-residue chain is Omega-conotoxin-like TeAr94 (76 aa).

The signal sequence occupies residues 1–22 (MKLTCMMIVAVLFLTAWTFVTA). The propeptide occupies 23–50 (VPHSSNALENLYLKAHHEMNNPEDSELN). 3 cysteine pairs are disulfide-bonded: Cys53/Cys67, Cys60/Cys71, and Cys66/Cys75.

Belongs to the conotoxin O1 superfamily. Expressed by the venom duct.

The protein resides in the secreted. Omega-conotoxins act at presynaptic membranes, they bind and block voltage-gated calcium channels. The protein is Omega-conotoxin-like TeAr94 of Conus textile (Cloth-of-gold cone).